The following is a 254-amino-acid chain: Imidazole glycerol phosphate synthase subunit HisF (254 aa).

Active-site residues include aspartate 11 and aspartate 130.

This sequence belongs to the HisA/HisF family. In terms of assembly, heterodimer of HisH and HisF.

The protein localises to the cytoplasm. The catalysed reaction is 5-[(5-phospho-1-deoxy-D-ribulos-1-ylimino)methylamino]-1-(5-phospho-beta-D-ribosyl)imidazole-4-carboxamide + L-glutamine = D-erythro-1-(imidazol-4-yl)glycerol 3-phosphate + 5-amino-1-(5-phospho-beta-D-ribosyl)imidazole-4-carboxamide + L-glutamate + H(+). The protein operates within amino-acid biosynthesis; L-histidine biosynthesis; L-histidine from 5-phospho-alpha-D-ribose 1-diphosphate: step 5/9. Functionally, IGPS catalyzes the conversion of PRFAR and glutamine to IGP, AICAR and glutamate. The HisF subunit catalyzes the cyclization activity that produces IGP and AICAR from PRFAR using the ammonia provided by the HisH subunit. The chain is Imidazole glycerol phosphate synthase subunit HisF from Acidiphilium cryptum (strain JF-5).